The sequence spans 430 residues: Forkhead box protein N2 (430 aa).

Residues 1 to 47 (MGPATGMTPDKNIESPTAEKVPGLSQTENMGSLPEEVGAARPKASMV) form a disordered region. The fork-head DNA-binding region spans 108–204 (KPPYSFSLLI…QALKKQPFSS (97 aa)). Disordered stretches follow at residues 299–326 (NIDPKEDHNYSASGGDSQRCESRSSVSS) and 338–391 (PKNS…EASQ). A compositionally biased stretch (acidic residues) spans 355-366 (DDTDIDYEEDTL). A compositionally biased stretch (basic and acidic residues) spans 381-390 (HGSKLRKEAS).

As to expression, expressed in the developing eye from stage 23. Localized to the prospective retinal layer and a layer of cells lateral to the ventricular zone. At stage 29, expression extends to the branchial arches and the brain. At stage 33/34, expressed in the vagal ganglion. At stage 36, expression in the retina decreases. Not expressed in the eye lens.

It is found in the nucleus. In Xenopus laevis (African clawed frog), this protein is Forkhead box protein N2.